Reading from the N-terminus, the 875-residue chain is Translation initiation factor IF-2 (875 aa).

3 disordered regions span residues 1–20 (MSDS…LKTA), 47–102 (LMGR…LREA), and 126–246 (EEER…DRRG). Low complexity predominate over residues 54–66 (AAPTAAPAAAATP). Residues 67–85 (APTPVAPPPPPPPPPPPPS) are compositionally biased toward pro residues. 2 stretches are compositionally biased toward basic and acidic residues: residues 88–102 (RETR…LREA) and 126–140 (EEER…RAEA). Low complexity-rich tracts occupy residues 141–195 (EAAA…PAAP) and 202–221 (PAAP…PAAP). Positions 223 to 246 (KRPELAAKKPAHPQRDRKTEDRRG) are enriched in basic and acidic residues. One can recognise a tr-type G domain in the interval 374–544 (ARPPVVTIMG…LLQAELLELK (171 aa)). Residues 383–390 (GHVDHGKT) are G1. 383 to 390 (GHVDHGKT) is a binding site for GTP. Positions 408–412 (GITQH) are G2. Residues 430-433 (DTPG) form a G3 region. GTP-binding positions include 430–434 (DTPGH) and 484–487 (TKAD). Residues 484-487 (TKAD) are G4. Positions 520-522 (SAK) are G5.

The protein belongs to the TRAFAC class translation factor GTPase superfamily. Classic translation factor GTPase family. IF-2 subfamily.

The protein localises to the cytoplasm. Functionally, one of the essential components for the initiation of protein synthesis. Protects formylmethionyl-tRNA from spontaneous hydrolysis and promotes its binding to the 30S ribosomal subunits. Also involved in the hydrolysis of GTP during the formation of the 70S ribosomal complex. The sequence is that of Translation initiation factor IF-2 from Novosphingobium aromaticivorans (strain ATCC 700278 / DSM 12444 / CCUG 56034 / CIP 105152 / NBRC 16084 / F199).